Consider the following 334-residue polypeptide: Putative lysine N-acyltransferase C17G9.06c (334 aa).

A substrate-binding site is contributed by histidine 248. Glutamate 286 serves as the catalytic Proton acceptor.

Belongs to the lysine N-acyltransferase mbtK family.

Its subcellular location is the cytoplasm. The protein localises to the nucleus. This is Putative lysine N-acyltransferase C17G9.06c from Schizosaccharomyces pombe (strain 972 / ATCC 24843) (Fission yeast).